Reading from the N-terminus, the 476-residue chain is Aspartyl/glutamyl-tRNA(Asn/Gln) amidotransferase subunit B (476 aa).

This sequence belongs to the GatB/GatE family. GatB subfamily. Heterotrimer of A, B and C subunits.

It catalyses the reaction L-glutamyl-tRNA(Gln) + L-glutamine + ATP + H2O = L-glutaminyl-tRNA(Gln) + L-glutamate + ADP + phosphate + H(+). The enzyme catalyses L-aspartyl-tRNA(Asn) + L-glutamine + ATP + H2O = L-asparaginyl-tRNA(Asn) + L-glutamate + ADP + phosphate + 2 H(+). Functionally, allows the formation of correctly charged Asn-tRNA(Asn) or Gln-tRNA(Gln) through the transamidation of misacylated Asp-tRNA(Asn) or Glu-tRNA(Gln) in organisms which lack either or both of asparaginyl-tRNA or glutaminyl-tRNA synthetases. The reaction takes place in the presence of glutamine and ATP through an activated phospho-Asp-tRNA(Asn) or phospho-Glu-tRNA(Gln). The chain is Aspartyl/glutamyl-tRNA(Asn/Gln) amidotransferase subunit B from Moorella thermoacetica (strain ATCC 39073 / JCM 9320).